The sequence spans 433 residues: GTPase Obg (433 aa).

The Obg domain occupies 1–159 (MKFVDSADLI…FEIRAELKVL (159 aa)). The OBG-type G domain maps to 160–332 (ADVGFVGLPN…LLFMIYEELK (173 aa)). Residues 166 to 173 (GLPNAGKS), 191 to 195 (FTTIN), 213 to 216 (DLPG), 284 to 287 (NKMD), and 313 to 315 (SGL) each bind GTP. Residues Ser-173 and Thr-193 each contribute to the Mg(2+) site. The OCT domain occupies 355 to 433 (KFEEQKEDIQ…VFDYELEWTD (79 aa)).

It belongs to the TRAFAC class OBG-HflX-like GTPase superfamily. OBG GTPase family. As to quaternary structure, monomer. Requires Mg(2+) as cofactor.

The protein localises to the cytoplasm. Its function is as follows. An essential GTPase which binds GTP, GDP and possibly (p)ppGpp with moderate affinity, with high nucleotide exchange rates and a fairly low GTP hydrolysis rate. Plays a role in control of the cell cycle, stress response, ribosome biogenesis and in those bacteria that undergo differentiation, in morphogenesis control. The sequence is that of GTPase Obg from Mycoplasma capricolum subsp. capricolum (strain California kid / ATCC 27343 / NCTC 10154).